A 394-amino-acid polypeptide reads, in one-letter code: Putative transporter AraJ (394 aa).

At 1 to 4 the chain is on the cytoplasmic side; the sequence is MKKV. The helical transmembrane segment at 5–27 threads the bilayer; that stretch reads ILSLALGTFGLGMAEFGIMGVLT. Residues 28 to 41 are Periplasmic-facing; it reads ELAHNVGISIPAAG. Residues 42–63 form a helical membrane-spanning segment; that stretch reads HMISYYALGVVVGAPIIALFSS. The Cytoplasmic portion of the chain corresponds to 64-69; it reads RYSLKH. Residues 70–89 traverse the membrane as a helical segment; the sequence is ILLFLVALCVIGNAMFTLSS. Over 90 to 93 the chain is Periplasmic; it reads SYLM. Residues 94–116 form a helical membrane-spanning segment; that stretch reads LAIGRLVSGFPHGAFFGVGAIVL. Over 117–128 the chain is Cytoplasmic; that stretch reads SKIIKPGKVTAA. The helical transmembrane segment at 129-151 threads the bilayer; the sequence is VAGMVSGMTVANLLGIPLGTYLS. At 152–155 the chain is on the periplasmic side; the sequence is QEFS. A helical membrane pass occupies residues 156 to 178; that stretch reads WRYTFLLIAVFNIAVMASVYFWV. Topologically, residues 179–198 are cytoplasmic; that stretch reads PDIRDEAKGNLREQFHFLRS. A helical membrane pass occupies residues 199-221; that stretch reads PAPWLIFAATMFGNAGVFAWFSY. Residues 222–235 lie on the Periplasmic side of the membrane; it reads VKPYMMFISGFSET. The helical transmembrane segment at 236–255 threads the bilayer; it reads AMTFIMMLVGLGMVLGNMLS. The Cytoplasmic segment spans residues 256–261; the sequence is GRISGR. A helical transmembrane segment spans residues 262-284; the sequence is YSPLRIAAVTDFIIVLALLMLFF. Residues 285-293 are Periplasmic-facing; it reads CGGMKTTSL. Residues 294–316 traverse the membrane as a helical segment; that stretch reads IFAFICCAGLFALSAPLQILLLQ. Over 317–322 the chain is Cytoplasmic; sequence NAKGGE. Residues 323-342 form a helical membrane-spanning segment; the sequence is LLGAAGGQIAFNLGSAVGAY. The Periplasmic portion of the chain corresponds to 343–351; sequence CGGMMLTLG. Residues 352–374 traverse the membrane as a helical segment; that stretch reads LAYNYVALPAALLSFAAMSSLLL. The Cytoplasmic segment spans residues 375-394; that stretch reads YGRYKRQQAADTPVLAKPLG.

It belongs to the major facilitator superfamily.

The protein localises to the cell inner membrane. Functionally, may be involved in either the transport or processing of arabinose polymers. This Escherichia coli (strain K12) protein is Putative transporter AraJ (araJ).